A 1113-amino-acid polypeptide reads, in one-letter code: MSTAGISDEASASAFTTAGYCPQLIKGIDSVLIIGSGGLSIGQAGEFDYSGSQAIKALKETGKRTILINPNIATNQTSYSLADEVYFLPVTPEFITHVIKRERPDGILLTFGGQTGLNCGVALQRAGTLEKYGVTVLGTPISVLETTEDRELFARALKEINMPIAESVACSTVEDAVAAANDIGYPVIVRSAYALGGLGSGFADDDLQLRQLCAQSLALSPQVLVEKSLKGWKEIEYEVVRDRVGNCITVCNMENFDPLGIHTGDSIVLAPSQTLSDEEFHMLRTAAIEIIRHLGVVGECNVQYALQPDGLAFKVIEVNARLSRSSALASKATGYPLAYTAAKIALGYTLPELPNPVTKSTVANFEPSLDYIVAKVPRWDLSKFQHVDKTIGSAMKSVGEVMAIGRNFEEAFQKAFRQVDPSLLGFQGSDEFADLDEALQFPTDRRWLAVGEALMNRGYSVERVHELTKIDRFFLHKCMNIVRMQKQLETLGSINRLDEVLLRKAKKLGFCDKQIARAISDDLSELDIRALRKSFGILPFVKRIDTMAAEVPAVTNYLYVTYNAVKDDVTFGDNGIMVLGSGVYRIGSSVEFDWCAVNTVQALRKEGHKTIMINYNPETVSTDFDEVDRLYFEELSFERVMDIYEAECASGCVISMGGQQPQNIASQLYEQGANILGTSPEDIDKAEDRHKFSTILDTLGLDQPRWSELKSLSEVKHFLDDVGYPVLVRPSYVLSGAAMSTVYNSEDLEGVFESAVAVSPEHPVVISKFIEGAQELDIDAVAYKGSLLVHAISEHVENAGVHSGDATLVLPPQSLKEEEKTRLKQLAAQVAAAWNITGPFNMQIIKTAEGGHTCLKIIECNIRASRSFPFVSKVLGVNFVEIAVKAFLGGDLVPPSCDLMARSYNYVATKCPQFSFTRLPGADPFLGVEMASVGEVAAFGSNALESYWVALQGLMSFCVPLPPSGILLGGDLSKEHLGRVAALLAPHGFTLLALSEATCEYLSRYLPAESSVTVLQMPETGREVRALFEQHNVQCVVNLAARRASSPIDPDYRIRRSAIDFAVPLFNEPQTTMLFARALSAYLPAELEMRQSDGPETPSYVLPWREYLGFKPT.

A carboxyphosphate synthetic domain region spans residues 23–420 (QLIKGIDSVL…AFQKAFRQVD (398 aa)). Residues Arg150, Arg190, Gly196, Gly197, Lys227, Leu229, Glu234, Gly260, Ile261, His262, Gln303, and Glu317 each contribute to the ATP site. The region spanning 154–346 (ARALKEINMP…LAYTAAKIAL (193 aa)) is the ATP-grasp 1 domain. Gln303, Glu317, and Asn319 together coordinate Mg(2+). Positions 303, 317, and 319 each coordinate Mn(2+). The segment at 421–568 (PSLLGFQGSD…YVTYNAVKDD (148 aa)) is oligomerization domain. The tract at residues 569–955 (VTFGDNGIMV…SYWVALQGLM (387 aa)) is carbamoyl phosphate synthetic domain. An ATP-grasp 2 domain is found at 693-888 (STILDTLGLD…FVEIAVKAFL (196 aa)). ATP is bound by residues Arg729, Lys768, Ile770, Glu775, Gly800, Val801, His802, Ser803, Gln843, and Glu859. 3 residues coordinate Mg(2+): Gln843, Glu859, and Asn861. Mn(2+) is bound by residues Gln843, Glu859, and Asn861. Residues 956-1097 (SFCVPLPPSG…EMRQSDGPET (142 aa)) are allosteric domain. An MGS-like domain is found at 957–1113 (FCVPLPPSGI…WREYLGFKPT (157 aa)).

Belongs to the CarB family. As to quaternary structure, heterodimer composed of 2 chains; the small (or glutamine) chain promotes the hydrolysis of glutamine to ammonia, which is used by the large (or ammonia) chain to synthesize carbamoyl phosphate. Mg(2+) serves as cofactor. The cofactor is Mn(2+).

Its subcellular location is the cytoplasm. The enzyme catalyses hydrogencarbonate + L-glutamine + 2 ATP + H2O = carbamoyl phosphate + L-glutamate + 2 ADP + phosphate + 2 H(+). It carries out the reaction hydrogencarbonate + NH4(+) + 2 ATP = carbamoyl phosphate + 2 ADP + phosphate + 2 H(+). It functions in the pathway amino-acid biosynthesis; L-arginine biosynthesis; carbamoyl phosphate from bicarbonate: step 1/1. Large subunit of the arginine-specific carbamoyl phosphate synthase (CPSase). CPSase catalyzes the formation of carbamoyl phosphate from the ammonia moiety of glutamine, hydrogencarbonate, and phosphate donated by ATP, constituting the first step of 2 biosynthetic pathways, one leading to arginine and/or urea and the other to pyrimidine nucleotides. The large subunit (synthetase) binds the substrates ammonia (free or transferred from glutamine from the small subunit), hydrogencarbonate and ATP and carries out an ATP-coupled ligase reaction, activating hydrogencarbonate by forming carboxy phosphate which reacts with ammonia to form carbamoyl phosphate. In Eremothecium gossypii (strain ATCC 10895 / CBS 109.51 / FGSC 9923 / NRRL Y-1056) (Yeast), this protein is Carbamoyl phosphate synthase arginine-specific large chain (CPA2).